A 254-amino-acid chain; its full sequence is MVKVILNGCSGKMGSVISNLAETKFPNVEIVAGIDNNTNAQRSYPIFAKPEDCNISYDVLLDFSRADALKSLVQFSKKTKKPLILCSTGYTAEDLKFIEESSKEIPLFRSANMSIGINLVNNLLKKVAPVLYENFDIELVERHHNQKVDAPSGTALLLAHTIQDSLNEETKLLYGREGIAKREKNEICVNTVRGGGIIGDHEVIFAGDGEVIEINHKAISRDVFAIGALKACEYMADKTKAGKYSMDDVLQLNF.

Residues 8 to 13, aspartate 35, 86 to 88, and 110 to 113 contribute to the NAD(+) site; these read GCSGKM, CST, and SANM. Histidine 143 acts as the Proton donor/acceptor in catalysis. Histidine 144 provides a ligand contact to (S)-2,3,4,5-tetrahydrodipicolinate. Lysine 147 acts as the Proton donor in catalysis. 153-154 is a binding site for (S)-2,3,4,5-tetrahydrodipicolinate; the sequence is GT.

Belongs to the DapB family.

Its subcellular location is the cytoplasm. The catalysed reaction is (S)-2,3,4,5-tetrahydrodipicolinate + NAD(+) + H2O = (2S,4S)-4-hydroxy-2,3,4,5-tetrahydrodipicolinate + NADH + H(+). It carries out the reaction (S)-2,3,4,5-tetrahydrodipicolinate + NADP(+) + H2O = (2S,4S)-4-hydroxy-2,3,4,5-tetrahydrodipicolinate + NADPH + H(+). It participates in amino-acid biosynthesis; L-lysine biosynthesis via DAP pathway; (S)-tetrahydrodipicolinate from L-aspartate: step 4/4. In terms of biological role, catalyzes the conversion of 4-hydroxy-tetrahydrodipicolinate (HTPA) to tetrahydrodipicolinate. This is 4-hydroxy-tetrahydrodipicolinate reductase from Clostridium perfringens (strain 13 / Type A).